Consider the following 353-residue polypeptide: Peptide chain release factor 1 (353 aa).

At Gln230 the chain carries N5-methylglutamine.

The protein belongs to the prokaryotic/mitochondrial release factor family. In terms of processing, methylated by PrmC. Methylation increases the termination efficiency of RF1.

Its subcellular location is the cytoplasm. Its function is as follows. Peptide chain release factor 1 directs the termination of translation in response to the peptide chain termination codons UAG and UAA. The polypeptide is Peptide chain release factor 1 (Leptospira biflexa serovar Patoc (strain Patoc 1 / ATCC 23582 / Paris)).